The sequence spans 347 residues: GMP reductase (347 aa).

A108–A131 is an NADP(+) binding site. K(+) contacts are provided by G181 and G183. The active-site Thioimidate intermediate is the C186. I216–V239 serves as a coordination point for NADP(+).

Belongs to the IMPDH/GMPR family. GuaC type 1 subfamily. Homotetramer.

It catalyses the reaction IMP + NH4(+) + NADP(+) = GMP + NADPH + 2 H(+). Catalyzes the irreversible NADPH-dependent deamination of GMP to IMP. It functions in the conversion of nucleobase, nucleoside and nucleotide derivatives of G to A nucleotides, and in maintaining the intracellular balance of A and G nucleotides. This is GMP reductase from Escherichia coli O7:K1 (strain IAI39 / ExPEC).